The chain runs to 505 residues: Maturase K (505 aa).

It belongs to the intron maturase 2 family. MatK subfamily.

The protein localises to the plastid. The protein resides in the chloroplast. Usually encoded in the trnK tRNA gene intron. Probably assists in splicing its own and other chloroplast group II introns. The protein is Maturase K of Calycanthus floridus (Eastern sweetshrub).